Consider the following 931-residue polypeptide: Protein unc-45 homolog B (931 aa).

3 TPR repeats span residues 6 to 39 (AAQL…TKDK), 43 to 76 (ATLY…NSAD), and 77 to 110 (IKAL…EPRN). 3 ARM repeats span residues 169-208 (EAGA…GMCS), 211-250 (RARA…AIID), and 751-790 (DKLR…NMVL).

In terms of assembly, interacts with HSP90 in an ATP-independent manner. Interacts with UBE4B; the interaction may target UNC45B for proteasomal degradation. Highly expressed in adult skeletal muscle and heart. Detected at intermediate levels in lung. Highly expressed in embryonic heart.

The protein resides in the cytoplasm. The protein localises to the myofibril. It localises to the sarcomere. It is found in the z line. Its subcellular location is the a band. The protein resides in the perinuclear region. The protein localises to the cytosol. Functionally, acts as a co-chaperone for HSP90 and is required for proper folding of the myosin motor domain. Plays a role in sarcomere formation during muscle cell development. Is necessary for normal early lens development. This chain is Protein unc-45 homolog B (Unc45b), found in Mus musculus (Mouse).